Reading from the N-terminus, the 195-residue chain is Dephospho-CoA kinase (195 aa).

The 193-residue stretch at 3-195 folds into the DPCK domain; it reads IIGLTGSIAM…LFVIKSLLKN (193 aa). Residue 11–16 participates in ATP binding; sequence AMGKST.

This sequence belongs to the CoaE family.

The protein resides in the cytoplasm. The enzyme catalyses 3'-dephospho-CoA + ATP = ADP + CoA + H(+). It participates in cofactor biosynthesis; coenzyme A biosynthesis; CoA from (R)-pantothenate: step 5/5. In terms of biological role, catalyzes the phosphorylation of the 3'-hydroxyl group of dephosphocoenzyme A to form coenzyme A. This is Dephospho-CoA kinase from Bartonella henselae (strain ATCC 49882 / DSM 28221 / CCUG 30454 / Houston 1) (Rochalimaea henselae).